Here is a 258-residue protein sequence, read N- to C-terminus: Imidazole glycerol phosphate synthase subunit HisF (258 aa).

Active-site residues include aspartate 12 and aspartate 131.

This sequence belongs to the HisA/HisF family. In terms of assembly, heterodimer of HisH and HisF.

It localises to the cytoplasm. The enzyme catalyses 5-[(5-phospho-1-deoxy-D-ribulos-1-ylimino)methylamino]-1-(5-phospho-beta-D-ribosyl)imidazole-4-carboxamide + L-glutamine = D-erythro-1-(imidazol-4-yl)glycerol 3-phosphate + 5-amino-1-(5-phospho-beta-D-ribosyl)imidazole-4-carboxamide + L-glutamate + H(+). It participates in amino-acid biosynthesis; L-histidine biosynthesis; L-histidine from 5-phospho-alpha-D-ribose 1-diphosphate: step 5/9. Its function is as follows. IGPS catalyzes the conversion of PRFAR and glutamine to IGP, AICAR and glutamate. The HisF subunit catalyzes the cyclization activity that produces IGP and AICAR from PRFAR using the ammonia provided by the HisH subunit. This chain is Imidazole glycerol phosphate synthase subunit HisF, found in Sinorhizobium medicae (strain WSM419) (Ensifer medicae).